Here is a 712-residue protein sequence, read N- to C-terminus: Secretin OutD (712 aa).

The first 27 residues, 1–27 (MLGKGIKKSWGWLGLTVLLLGSPCGWA), serve as a signal peptide directing secretion. Positions 28-124 (AEFSASFKGT…LANNEQPGVG (97 aa)) are N0. An N1 region spans residues 126-190 (ELVTRVVPLN…DIVNTVDKTG (65 aa)). The N2 stretch occupies residues 191–264 (DREMITVSLN…MIRQLDRKQV (74 aa)). The N3 stretch occupies residues 267–394 (GGTKVIYLKY…DLEQVINQLD (128 aa)). Positions 288–342 (GNGTSGNRNSSSTNSSRPSSTRSSSTLNNSNSSSSGSSSGSGSSSSSSSSSMGFG) are disordered. The segment at 399 to 651 (QVLVEAIIAE…LFLRPTIIRD (253 aa)) is secretin. A s domain region spans residues 653–712 (QQYQQASISKYNSFNNEQQQQRGQGNSVLDNNTLRLSGGNTYTFRQVQSSISAFYQPEGR).

Belongs to the bacterial secretin family. GSP D subfamily. As to quaternary structure, forms a cylindrical channel with 15 subunits.

It is found in the cell outer membrane. Involved in a type II secretion system (T2SS, formerly general secretion pathway, GSP) for the export of proteins. Required for the translocation of the multiple pectic enzymes. This subunit forms the outer membrane channel. The chain is Secretin OutD (outD) from Dickeya chrysanthemi (Pectobacterium chrysanthemi).